Reading from the N-terminus, the 216-residue chain is Cytochrome c-type protein Cgr1 (216 aa).

Residues 18–38 (WPIVVGVVVVVLIAAGAGFWV) form a helical membrane-spanning segment. Cys-46, Cys-50, His-51, Cys-95, Cys-98, His-99, Cys-142, Cys-147, His-148, Cys-176, Cys-179, His-180, Cys-190, Cys-193, and His-194 together coordinate heme.

It belongs to the multiheme cytochrome c family. As to quaternary structure, may form a membrane-associated complex with Cgr2. Post-translationally, binds 5 heme groups per subunit.

The protein resides in the cell membrane. In terms of biological role, probably transfers electrons from a membrane-associated electron donor (e.g. the membrane quinone pool) to the [4Fe-4S] cluster of the Cgr2 reductase via its covalently bound heme groups. The protein is Cytochrome c-type protein Cgr1 of Eggerthella lenta (strain ATCC 25559 / DSM 2243 / CCUG 17323 / JCM 9979 / KCTC 3265 / NCTC 11813 / VPI 0255 / 1899 B) (Eubacterium lentum).